The chain runs to 182 residues: Adenylate kinase (182 aa).

12–17 (GAGKGT) contributes to the ATP binding site. The tract at residues 32–61 (STGDLLRDEVSSGSVLGIKAAEIMNKGELV) is NMP. AMP is bound by residues T33, R38, 59-61 (ELV), 85-88 (GFPR), and Q92. Residues 126–132 (ERGRQDD) form an LID region. R127 contributes to the ATP binding site. Positions 129 and 140 each coordinate AMP. A168 provides a ligand contact to ATP.

This sequence belongs to the adenylate kinase family. Monomer.

The protein resides in the cytoplasm. It catalyses the reaction AMP + ATP = 2 ADP. The protein operates within purine metabolism; AMP biosynthesis via salvage pathway; AMP from ADP: step 1/1. In terms of biological role, catalyzes the reversible transfer of the terminal phosphate group between ATP and AMP. Plays an important role in cellular energy homeostasis and in adenine nucleotide metabolism. The polypeptide is Adenylate kinase (Prochlorococcus marinus (strain NATL1A)).